Reading from the N-terminus, the 1086-residue chain is Auxin response factor 19 (1086 aa).

A DNA-binding region (TF-B3) is located at residues 126–228 (FCKTLTASDT…QLMLGIRRAN (103 aa)). Positions 454–485 (PSKLLNFQSPNLSSANSQFNKPNTVNHISQQM) are enriched in polar residues. Disordered stretches follow at residues 454–504 (PSKL…QQQQ), 545–564 (QSPN…QSML), 624–647 (LSQN…QQLQ), and 659–788 (QQQS…SVFE). Over residues 486-504 (QAQPAMVKSQQQQQQQQQQ) the composition is skewed to low complexity. Over residues 659-697 (QQQSIPPVSSSLQPQLSALQQTQSHQLQQLLSSQNQQPL) the composition is skewed to low complexity. Residues 700–710 (GNNSFPASTFM) are compositionally biased toward polar residues. Residues 711-724 (QPPQIQVSPQQQGQ) are compositionally biased toward low complexity. Residues 747 to 771 (SCSTSPSANNTGHDNVSPTNFLSRN) are compositionally biased toward polar residues. Over residues 772 to 785 (QQQGQAASVSASDS) the composition is skewed to low complexity. The PB1 domain occupies 958-1051 (RTYTKVQKRG…EVQQMSLDGD (94 aa)).

The protein belongs to the ARF family. Homodimers and heterodimers. Interacts with the auxin-responsive protein IAA1. Binds to JMJ30. Binds to ATXR2 in the nucleus.

The protein localises to the nucleus. Its function is as follows. Auxin response factors (ARFs) are transcriptional factors that bind specifically to the DNA sequence 5'-TGTCTC-3' found in the auxin-responsive promoter elements (AuxREs). Could act as transcriptional activator or repressor. Formation of heterodimers with Aux/IAA proteins may alter their ability to modulate early auxin response genes expression. Involved in ethylene responses. Regulates lateral root formation through direct regulation of LBD16 and/or LBD29. Functionally redundant with ARF7. Involved in cellular dedifferentiation during callus formation on callus-inducing medium (CIM) and in an ATXR2-dependent manner. In Arabidopsis thaliana (Mouse-ear cress), this protein is Auxin response factor 19.